The sequence spans 57 residues: Orphan toxin OrtT (57 aa).

The next 2 helical transmembrane spans lie at 6-26 (HMLVFYAVMAAIAFLITWFLS) and 34-54 (FLSAFLVGATWPMSFPVALLF).

The protein belongs to the GhoT/OrtT toxin family.

The protein resides in the cell inner membrane. Its function is as follows. Acts as an orphan toxin which is important for maintaining cell fitness during stress related to the stringent response. Increases the formation of persister cells. Has no known antitoxin. This Escherichia coli O6:H1 (strain CFT073 / ATCC 700928 / UPEC) protein is Orphan toxin OrtT.